The chain runs to 344 residues: Phenylalanine--tRNA ligase alpha subunit (344 aa).

Residue glutamate 258 coordinates Mg(2+).

Belongs to the class-II aminoacyl-tRNA synthetase family. Phe-tRNA synthetase alpha subunit type 1 subfamily. As to quaternary structure, tetramer of two alpha and two beta subunits. It depends on Mg(2+) as a cofactor.

The protein localises to the cytoplasm. The catalysed reaction is tRNA(Phe) + L-phenylalanine + ATP = L-phenylalanyl-tRNA(Phe) + AMP + diphosphate + H(+). This Thiobacillus denitrificans (strain ATCC 25259 / T1) protein is Phenylalanine--tRNA ligase alpha subunit.